We begin with the raw amino-acid sequence, 146 residues long: Large ribosomal subunit protein mL49 (146 aa).

The N-terminal 38 residues, methionine 1–alanine 38, are a transit peptide targeting the mitochondrion.

This sequence belongs to the mitochondrion-specific ribosomal protein mL49 family. In terms of assembly, component of the mitochondrial large ribosomal subunit (mt-LSU). Mature yeast 74S mitochondrial ribosomes consist of a small (37S) and a large (54S) subunit. The 37S small subunit contains a 15S ribosomal RNA (15S mt-rRNA) and 34 different proteins. The 54S large subunit contains a 21S rRNA (21S mt-rRNA) and 46 different proteins.

Its subcellular location is the mitochondrion. Functionally, component of the mitochondrial ribosome (mitoribosome), a dedicated translation machinery responsible for the synthesis of mitochondrial genome-encoded proteins, including at least some of the essential transmembrane subunits of the mitochondrial respiratory chain. The mitoribosomes are attached to the mitochondrial inner membrane and translation products are cotranslationally integrated into the membrane. The polypeptide is Large ribosomal subunit protein mL49 (IMG2) (Saccharomyces cerevisiae (strain ATCC 204508 / S288c) (Baker's yeast)).